The following is a 323-amino-acid chain: Sphingolipid delta(4)-desaturase DES1 (323 aa).

Gly-2 carries the N-myristoyl glycine lipid modification. The next 2 membrane-spanning stretches (helical) occupy residues Pro-41–Val-61 and Trp-68–Ile-88. The Histidine box-1 motif lies at His-89–His-93. A helical membrane pass occupies residues Trp-107–Tyr-127. Positions His-128–His-132 match the Histidine box-2 motif. Transmembrane regions (helical) follow at residues Phe-152–Phe-172, Tyr-184–Leu-204, and Leu-209–Phe-229. A Histidine box-3 motif is present at residues His-259–His-263. Ser-307 is modified (phosphoserine).

It belongs to the fatty acid desaturase type 1 family. DEGS subfamily. In terms of assembly, interacts with RLBP1; the interaction increases synthesis of chromophore-precursors by DEGS1. In terms of processing, myristoylation can target the enzyme to the mitochondria leading to an increase in ceramide levels.

The protein resides in the mitochondrion membrane. It is found in the endoplasmic reticulum membrane. It catalyses the reaction an N-acylsphinganine + 2 Fe(II)-[cytochrome b5] + O2 + 2 H(+) = an N-acylsphing-4-enine + 2 Fe(III)-[cytochrome b5] + 2 H2O. The enzyme catalyses all-trans-retinol = 11-cis-retinol. It carries out the reaction all-trans-retinol = 9-cis-retinol. The catalysed reaction is all-trans-retinol = 13-cis-retinol. It catalyses the reaction 11-cis-retinol = 13-cis-retinol. The enzyme catalyses 11-cis-retinol = 9-cis-retinol. Has sphingolipid-delta-4-desaturase activity. Converts D-erythro-sphinganine to D-erythro-sphingosine (E-sphing-4-enine). Catalyzes the equilibrium isomerization of retinols. The sequence is that of Sphingolipid delta(4)-desaturase DES1 (DEGS1) from Pongo abelii (Sumatran orangutan).